Consider the following 1744-residue polypeptide: Retrotransposon-like protein 1 (1744 aa).

Disordered stretches follow at residues 1-416 (MIEP…SPEE), 823-859 (READDETSDQPSSDGSDDLSESEPSELQQAGDSDQSG), and 1287-1439 (SSET…EVPS). Low complexity predominate over residues 19-30 (SSKQMESSEGSS). Residues 31 to 40 (NTVEETPGSS) are compositionally biased toward polar residues. The span at 41–80 (GAQAGAQAGAQAEAQAETQVEAQAEAQAEAQVEAQVEAQA) shows a compositional bias: low complexity. Positions 269–318 (DGSNQESSDGSNHELSNGSNHESSFGSNPESSDVSNLESSGGSNQESSDG) are enriched in polar residues. The segment covering 332–361 (SDNSNQELSDNSNQESSDSSNQSSDISNQE) has biased composition (low complexity). Acidic residues-rich tracts occupy residues 385-407 (SDQDDTDLGDDEEEEEEEGGEEE), 837-846 (GSDDLSESEP), and 1291-1437 (EDKE…DEEV). A run of 2 helical transmembrane segments spans residues 1473–1493 (FFRGLLYWKSLLGVAAVLVML) and 1520–1540 (LILDSTLIASSGMATAIAQLL).

As to expression, expressed in placenta and in various tissues in late-fetal stage.

The protein resides in the membrane. Its function is as follows. Plays an essential role in capillaries endothelial cells for the maintenance of feto-maternal interface and for development of the placenta. This is Retrotransposon-like protein 1 (Rtl1) from Mus musculus (Mouse).